Here is a 490-residue protein sequence, read N- to C-terminus: Betaine aldehyde dehydrogenase (490 aa).

Threonine 26, isoleucine 27, and aspartate 93 together coordinate K(+). 150-152 (GAW) lines the NAD(+) pocket. The active-site Charge relay system is the lysine 162. 176-179 (KPSE) is a binding site for NAD(+). Valine 180 contributes to the K(+) binding site. 230–233 (GVAS) serves as a coordination point for NAD(+). Leucine 246 is a binding site for K(+). Glutamate 252 functions as the Proton acceptor in the catalytic mechanism. NAD(+)-binding residues include glycine 254, cysteine 286, and glutamate 387. The active-site Nucleophile is cysteine 286. Position 286 is a cysteine sulfenic acid (-SOH) (cysteine 286). K(+)-binding residues include lysine 457 and glycine 460. The Charge relay system role is filled by glutamate 464.

This sequence belongs to the aldehyde dehydrogenase family. Dimer of dimers. Requires K(+) as cofactor.

The enzyme catalyses betaine aldehyde + NAD(+) + H2O = glycine betaine + NADH + 2 H(+). The protein operates within amine and polyamine biosynthesis; betaine biosynthesis via choline pathway; betaine from betaine aldehyde: step 1/1. Functionally, involved in the biosynthesis of the osmoprotectant glycine betaine. Catalyzes the irreversible oxidation of betaine aldehyde to the corresponding acid. This is Betaine aldehyde dehydrogenase from Escherichia coli O157:H7.